The sequence spans 430 residues: Sorting nexin-4 (430 aa).

The segment covering 1 to 18 (MDSASADASVTGSGNAKG) has biased composition (polar residues). A disordered region spans residues 1-22 (MDSASADASVTGSGNAKGSSAE). Residues 33–162 (LEILVSDPQK…IFLVGNEWDT (130 aa)) enclose the PX domain. The a 1,2-diacyl-sn-glycero-3-phospho-(1D-myo-inositol-3-phosphate) site is built by Arg83, Lys109, and Arg128. Positions 351-414 (ASRRDKINKL…NNLADENIKF (64 aa)) form a coiled coil.

This sequence belongs to the sorting nexin family.

It localises to the cytoplasm. The protein resides in the cytosol. Its subcellular location is the preautophagosomal structure membrane. It is found in the endosome membrane. Its function is as follows. Sorting nexin, involved in the separation or division of vacuoles throughout the entire life cycle of the cells. Involved in retrieval of late-Golgi SNAREs from post-Golgi endosomes to the trans-Golgi network, for cytoplasm to vacuole transport (Cvt), and autophagy of large cargos including mitophagy, pexophagy and glycophagy. The polypeptide is Sorting nexin-4 (SNX4) (Candida glabrata (strain ATCC 2001 / BCRC 20586 / JCM 3761 / NBRC 0622 / NRRL Y-65 / CBS 138) (Yeast)).